The sequence spans 257 residues: Imidazole glycerol phosphate synthase subunit HisF (257 aa).

Active-site residues include aspartate 12 and aspartate 131.

This sequence belongs to the HisA/HisF family. Heterodimer of HisH and HisF.

The protein localises to the cytoplasm. It catalyses the reaction 5-[(5-phospho-1-deoxy-D-ribulos-1-ylimino)methylamino]-1-(5-phospho-beta-D-ribosyl)imidazole-4-carboxamide + L-glutamine = D-erythro-1-(imidazol-4-yl)glycerol 3-phosphate + 5-amino-1-(5-phospho-beta-D-ribosyl)imidazole-4-carboxamide + L-glutamate + H(+). Its pathway is amino-acid biosynthesis; L-histidine biosynthesis; L-histidine from 5-phospho-alpha-D-ribose 1-diphosphate: step 5/9. Functionally, IGPS catalyzes the conversion of PRFAR and glutamine to IGP, AICAR and glutamate. The HisF subunit catalyzes the cyclization activity that produces IGP and AICAR from PRFAR using the ammonia provided by the HisH subunit. The protein is Imidazole glycerol phosphate synthase subunit HisF of Saccharophagus degradans (strain 2-40 / ATCC 43961 / DSM 17024).